The chain runs to 355 residues: Acyl-CoA desaturase 1 (355 aa).

Over 1-68 (MPAHMLQEIS…EGPPPKLEYV (68 aa)) the chain is Cytoplasmic. Positions 9–20 (ISSSYTTTTTIT) are enriched in low complexity. Residues 9 to 33 (ISSSYTTTTTITAPPSGNEREKVKT) form a disordered region. A helical transmembrane segment spans residues 69–89 (WRNIILMVLLHLGGLYGIILV). Asn-71 serves as a coordination point for substrate. Over 90 to 93 (PSCK) the chain is Lumenal. The helical transmembrane segment at 94–114 (LYTCLFGIFYYMTSALGITAG) threads the bilayer. Topologically, residues 115 to 213 (AHRLWSHRTY…EKLVMFQRRY (99 aa)) are cytoplasmic. The Fe cation site is built by His-116 and His-121. A Histidine box-1 motif is present at residues 116-121 (HRLWSH). Positions 144, 151, and 152 each coordinate substrate. 3 residues coordinate Fe cation: His-153, His-156, and His-157. Residues 153-157 (HRAHH) carry the Histidine box-2 motif. Arg-184 and Lys-185 together coordinate substrate. A helical transmembrane segment spans residues 214–233 (YKPGLLLMCFILPTLVPWYC). Topologically, residues 234 to 237 (WGET) are lumenal. The chain crosses the membrane as a helical span at residues 238-259 (FVNSLFVSTFLRYTLVLNATWL). Trp-258 contacts substrate. Topologically, residues 260 to 355 (VNSAAHLYGY…RTGDGSHKSS (96 aa)) are cytoplasmic. Residues His-265, His-294, His-297, and His-298 each contribute to the Fe cation site. The Histidine box-3 motif lies at 294–298 (HNYHH).

It belongs to the fatty acid desaturase type 1 family. Fe(2+) is required as a cofactor. In terms of tissue distribution, detected in liver (at protein level). Detected in skin and liver. Detected in sebaceous gland, but not in hair follicle. Detected in white and brown adipose tissue, eyelid, Harderian gland, and at lower levels in Meibomian gland, eyeball and adrenal gland. Highly expressed in liver, and detected at low levels in brain, heart, lung, stomach, skeletal muscle and kidney.

The protein localises to the endoplasmic reticulum membrane. The protein resides in the microsome membrane. The catalysed reaction is octadecanoyl-CoA + 2 Fe(II)-[cytochrome b5] + O2 + 2 H(+) = (9Z)-octadecenoyl-CoA + 2 Fe(III)-[cytochrome b5] + 2 H2O. Functionally, stearoyl-CoA desaturase that utilizes O(2) and electrons from reduced cytochrome b5 to introduce the first double bond into saturated fatty acyl-CoA substrates. Catalyzes the insertion of a cis double bond at the Delta-9 position into fatty acyl-CoA substrates including palmitoyl-CoA and stearoyl-CoA. Gives rise to a mixture of 16:1 and 18:1 unsaturated fatty acids. Plays an important role in lipid biosynthesis. Plays an important role in regulating the expression of genes that are involved in lipogenesis and in regulating mitochondrial fatty acid oxidation. Plays an important role in body energy homeostasis. Contributes to the biosynthesis of membrane phospholipids, cholesterol esters and triglycerides. Required for normal development of sebaceous glands. Required for the biosynthesis of normal levels of Delta-9 unsaturated fatty acids and 1-alkyl-2,3-diacylglycerol in the Harderian gland. Required for normal production of meibum, an oily material that prevents drying of the cornea. This chain is Acyl-CoA desaturase 1 (Scd1), found in Mus musculus (Mouse).